Reading from the N-terminus, the 241-residue chain is Lysoplasmalogenase TMEM86A (241 aa).

The Cytoplasmic portion of the chain corresponds to Met-1–Pro-13. The helical transmembrane segment at Lys-14–Leu-30 threads the bilayer. Topologically, residues Pro-31 to Ser-36 are extracellular. The chain crosses the membrane as a helical span at residues Trp-37–Val-59. At Arg-60 to Ser-67 the chain is on the cytoplasmic side. Residues Ala-68–Trp-87 form a helical membrane-spanning segment. The Extracellular segment spans residues Gln-88–Gly-96. Residues Leu-97 to Met-113 traverse the membrane as a helical segment. At Arg-114–Arg-119 the chain is on the cytoplasmic side. Residues Thr-120–Tyr-136 traverse the membrane as a helical segment. Residues Pro-137 to Ala-142 are Extracellular-facing. Residues Phe-143 to Trp-159 traverse the membrane as a helical segment. Residues Arg-160–Glu-176 are Cytoplasmic-facing. A helical transmembrane segment spans residues Leu-177–Leu-195. At Asn-196–Arg-206 the chain is on the extracellular side. A helical transmembrane segment spans residues Ala-207–Val-225. Topologically, residues Glu-226–Asp-241 are cytoplasmic.

It belongs to the TMEM86 family. Highly expressed in the jejunum, white adipose tissue, kidney and macrophages.

The protein localises to the endoplasmic reticulum membrane. The catalysed reaction is a 1-O-(1Z-alkenyl)-sn-glycero-3-phosphocholine + H2O = a 2,3-saturated aldehyde + sn-glycerol 3-phosphocholine. The enzyme catalyses a 1-O-(1Z-alkenyl)-sn-glycero-3-phosphoethanolamine + H2O = a 2,3-saturated aldehyde + sn-glycero-3-phosphoethanolamine. Catalyzes the hydrolysis of the vinyl ether bond of choline or ethanolamine lysoplasmalogens, forming fatty aldehyde and glycerophosphocholine or glycerophosphoethanolamine, respectively and is specific for the sn-2-deacylated (lyso) form of plasmalogen. Plays an important role in lysoplasmalogen metabolism in the adipocyte tissue and macrophages. The polypeptide is Lysoplasmalogenase TMEM86A (Tmem86a) (Mus musculus (Mouse)).